We begin with the raw amino-acid sequence, 523 residues long: Na(+)/H(+) antiporter NhaB (523 aa).

The next 10 membrane-spanning stretches (helical) occupy residues 28–48 (FLII…WLLV), 51–71 (FIFT…GLLA), 89–109 (LSAN…IYFV), 137–157 (MAAF…VISI), 237–257 (FFIR…ATCV), 302–322 (AIIC…VGLI), 347–367 (TESL…AVII), 390–410 (LFYI…VGTV), 445–465 (VATP…LAPL), and 476–496 (MALP…MYLL).

The protein belongs to the NhaB Na(+)/H(+) (TC 2.A.34) antiporter family.

It localises to the cell inner membrane. The catalysed reaction is 2 Na(+)(in) + 3 H(+)(out) = 2 Na(+)(out) + 3 H(+)(in). Na(+)/H(+) antiporter that extrudes sodium in exchange for external protons. In Tolumonas auensis (strain DSM 9187 / NBRC 110442 / TA 4), this protein is Na(+)/H(+) antiporter NhaB.